The following is a 352-amino-acid chain: Heat-inducible transcription repressor HrcA (352 aa).

The protein belongs to the HrcA family.

Functionally, negative regulator of class I heat shock genes (grpE-dnaK-dnaJ and groELS operons). Prevents heat-shock induction of these operons. The protein is Heat-inducible transcription repressor HrcA of Latilactobacillus sakei subsp. sakei (strain 23K) (Lactobacillus sakei subsp. sakei).